We begin with the raw amino-acid sequence, 703 residues long: DNA ligase (703 aa).

Residues 54–58, 103–104, and E132 each bind NAD(+); these read DAEYD and SL. K134 (N6-AMP-lysine intermediate) is an active-site residue. NAD(+) is bound by residues R155, E192, K308, and K332. The Zn(2+) site is built by C426, C429, C444, and C450. In terms of domain architecture, BRCT spans 608–698; it reads EGPGPLDGVV…ADAARALAVP (91 aa).

It belongs to the NAD-dependent DNA ligase family. LigA subfamily. Mg(2+) is required as a cofactor. The cofactor is Mn(2+).

It catalyses the reaction NAD(+) + (deoxyribonucleotide)n-3'-hydroxyl + 5'-phospho-(deoxyribonucleotide)m = (deoxyribonucleotide)n+m + AMP + beta-nicotinamide D-nucleotide.. Functionally, DNA ligase that catalyzes the formation of phosphodiester linkages between 5'-phosphoryl and 3'-hydroxyl groups in double-stranded DNA using NAD as a coenzyme and as the energy source for the reaction. It is essential for DNA replication and repair of damaged DNA. In Parafrankia sp. (strain EAN1pec), this protein is DNA ligase.